A 338-amino-acid polypeptide reads, in one-letter code: UDP-3-O-acylglucosamine N-acyltransferase (338 aa).

The active-site Proton acceptor is His-251.

This sequence belongs to the transferase hexapeptide repeat family. LpxD subfamily. In terms of assembly, homotrimer.

It carries out the reaction a UDP-3-O-[(3R)-3-hydroxyacyl]-alpha-D-glucosamine + a (3R)-hydroxyacyl-[ACP] = a UDP-2-N,3-O-bis[(3R)-3-hydroxyacyl]-alpha-D-glucosamine + holo-[ACP] + H(+). Its pathway is bacterial outer membrane biogenesis; LPS lipid A biosynthesis. Functionally, catalyzes the N-acylation of UDP-3-O-acylglucosamine using 3-hydroxyacyl-ACP as the acyl donor. Is involved in the biosynthesis of lipid A, a phosphorylated glycolipid that anchors the lipopolysaccharide to the outer membrane of the cell. The chain is UDP-3-O-acylglucosamine N-acyltransferase from Psychrobacter cryohalolentis (strain ATCC BAA-1226 / DSM 17306 / VKM B-2378 / K5).